The following is a 101-amino-acid chain: UPF0473 protein EF_1204 (101 aa).

Belongs to the UPF0473 family.

The protein is UPF0473 protein EF_1204 of Enterococcus faecalis (strain ATCC 700802 / V583).